A 644-amino-acid chain; its full sequence is Exoribonuclease 2 (644 aa).

Positions 189-516 constitute an RNB domain; sequence RKDLTALDFV…NHRLLKAVIK (328 aa). Residues 561 to 643 form the S1 motif domain; it reads DTRFAAEIVD…ETRSIIARPV (83 aa).

This sequence belongs to the RNR ribonuclease family. RNase II subfamily.

The protein localises to the cytoplasm. The enzyme catalyses Exonucleolytic cleavage in the 3'- to 5'-direction to yield nucleoside 5'-phosphates.. Involved in mRNA degradation. Hydrolyzes single-stranded polyribonucleotides processively in the 3' to 5' direction. This is Exoribonuclease 2 from Escherichia coli O157:H7.